The chain runs to 502 residues: Probable cytochrome P450 514A4 (502 aa).

A helical transmembrane segment spans residues 4–24 (IFTIILTITILVLSLILKDLL). Residue Cys448 participates in heme binding.

The protein belongs to the cytochrome P450 family. The cofactor is heme.

Its subcellular location is the membrane. The sequence is that of Probable cytochrome P450 514A4 (cyp514A4) from Dictyostelium discoideum (Social amoeba).